Consider the following 347-residue polypeptide: S-adenosylmethionine:tRNA ribosyltransferase-isomerase (347 aa).

The protein belongs to the QueA family. In terms of assembly, monomer.

It is found in the cytoplasm. The enzyme catalyses 7-aminomethyl-7-carbaguanosine(34) in tRNA + S-adenosyl-L-methionine = epoxyqueuosine(34) in tRNA + adenine + L-methionine + 2 H(+). The protein operates within tRNA modification; tRNA-queuosine biosynthesis. In terms of biological role, transfers and isomerizes the ribose moiety from AdoMet to the 7-aminomethyl group of 7-deazaguanine (preQ1-tRNA) to give epoxyqueuosine (oQ-tRNA). The protein is S-adenosylmethionine:tRNA ribosyltransferase-isomerase of Pseudomonas paraeruginosa (strain DSM 24068 / PA7) (Pseudomonas aeruginosa (strain PA7)).